The chain runs to 557 residues: Dihydroxy-acid dehydratase (557 aa).

Cysteine 50 provides a ligand contact to [2Fe-2S] cluster. Aspartate 82 provides a ligand contact to Mg(2+). Cysteine 123 is a binding site for [2Fe-2S] cluster. Aspartate 124 and lysine 125 together coordinate Mg(2+). The residue at position 125 (lysine 125) is an N6-carboxylysine. Position 195 (cysteine 195) interacts with [2Fe-2S] cluster. Residue glutamate 447 participates in Mg(2+) binding. Serine 473 serves as the catalytic Proton acceptor.

This sequence belongs to the IlvD/Edd family. As to quaternary structure, homodimer. The cofactor is [2Fe-2S] cluster. Mg(2+) is required as a cofactor.

The enzyme catalyses (2R)-2,3-dihydroxy-3-methylbutanoate = 3-methyl-2-oxobutanoate + H2O. The catalysed reaction is (2R,3R)-2,3-dihydroxy-3-methylpentanoate = (S)-3-methyl-2-oxopentanoate + H2O. It functions in the pathway amino-acid biosynthesis; L-isoleucine biosynthesis; L-isoleucine from 2-oxobutanoate: step 3/4. It participates in amino-acid biosynthesis; L-valine biosynthesis; L-valine from pyruvate: step 3/4. Its function is as follows. Functions in the biosynthesis of branched-chain amino acids. Catalyzes the dehydration of (2R,3R)-2,3-dihydroxy-3-methylpentanoate (2,3-dihydroxy-3-methylvalerate) into 2-oxo-3-methylpentanoate (2-oxo-3-methylvalerate) and of (2R)-2,3-dihydroxy-3-methylbutanoate (2,3-dihydroxyisovalerate) into 2-oxo-3-methylbutanoate (2-oxoisovalerate), the penultimate precursor to L-isoleucine and L-valine, respectively. The polypeptide is Dihydroxy-acid dehydratase (Nitrosomonas eutropha (strain DSM 101675 / C91 / Nm57)).